Reading from the N-terminus, the 287-residue chain is Cuticle collagen 38 (287 aa).

A signal peptide spans methionine 1–glycine 19. The segment at glutamine 95–histidine 287 is disordered. Pro residues predominate over residues proline 98 to leucine 107. 2 Collagen-like domains span residues glutamine 145–glycine 200 and glycine 215–proline 273. Residues threonine 184 to aspartate 205 show a composition bias toward low complexity. Residues glycine 206–glycine 215 show a composition bias toward gly residues. The segment covering aspartate 238–glutamine 252 has biased composition (low complexity).

It belongs to the cuticular collagen family. In terms of assembly, collagen polypeptide chains are complexed within the cuticle by disulfide bonds and other types of covalent cross-links.

Its subcellular location is the nucleus. In terms of biological role, probable cuticular collagen-like protein. Nematode cuticles are composed largely of collagen-like proteins. The cuticle functions both as an exoskeleton and as a barrier to protect the worm from its environment. Acts downstream of the Wnt signaling pathway, perhaps in the formation of the adult cuticle. The chain is Cuticle collagen 38 from Caenorhabditis elegans.